The following is a 709-amino-acid chain: UV-stimulated scaffold protein A (709 aa).

The span at 1-10 shows a compositional bias: basic and acidic residues; that stretch reads MDQKLSKLVE. Residues 1–20 form a disordered region; it reads MDQKLSKLVEELTTSGEPRL. The segment at 2 to 145 is VHS-like; sequence DQKLSKLVEE…HFLRHNKKVD (144 aa). A coiled-coil region spans residues 165 to 199; it reads KHLDKIYQERASQAEREMQEMSGEIESCLTEVESC. Disordered regions lie at residues 230-289 and 386-406; these read SCAG…DSDL and EGGERRRTEALGDAEEDEDDE. Residues 280–289 show a composition bias toward acidic residues; the sequence is PSDEDEDSDL. Phosphoserine occurs at positions 281 and 287. Basic and acidic residues predominate over residues 386-395; that stretch reads EGGERRRTEA. Residues 397-406 are compositionally biased toward acidic residues; the sequence is GDAEEDEDDE. Lysine 414 is covalently cross-linked (Glycyl lysine isopeptide (Lys-Gly) (interchain with G-Cter in ubiquitin)). The interval 469–495 is disordered; the sequence is DHLPPPSSASPSRALPEPQEAQKLAAE. Over residues 477 to 486 the composition is skewed to low complexity; that stretch reads ASPSRALPEP. The UVSSA-type zinc-finger motif lies at 564 to 591; that stretch reads QHWCRAPRPDGRLCERQDRLKCPFHGKI. The Zn(2+) site is built by cysteine 567, cysteine 577, cysteine 585, and histidine 588. A disordered region spans residues 588-655; that stretch reads HGKIVPRDDE…GKGRGKKRRY (68 aa). The segment covering 592 to 632 has biased composition (basic and acidic residues); sequence VPRDDEGRPLDPEDRAREQRRQLQKQERPEWQDPELMRDVE. Residues 646-655 are compositionally biased toward basic residues; that stretch reads GKGRGKKRRY.

This sequence belongs to the UVSSA family. In terms of assembly, interacts with the elongating form of RNA polymerase II (RNA pol IIo) during transcription stress. Interacts with the TFIIH complex during transcription stress. Interacts with ERCC6. Interacts with ERCC8. Interacts with USP7. Monoubiquitinated at Lys-414 in response to transcription stress; this promotes efficient transfer of TFIIH to stalled RNA polymerase II.

Its subcellular location is the chromosome. In terms of biological role, factor involved in transcription-coupled nucleotide excision repair (TC-NER), a mechanism that rapidly removes RNA polymerase II-blocking lesions from the transcribed strand of active genes. Acts as a key adapter that promotes recruitment of factors involved in TC-NER. Facilitates the ubiquitination of the elongating form of RNA polymerase II (RNA pol IIo) at DNA damage sites, thereby promoting RNA pol IIo backtracking and access by the TC-NER machinery to lesion sites. Also promotes stabilization of ERCC6/CSB by recruiting deubiquitinating enzyme USP7 to TC-NER complexes, preventing UV-induced degradation of ERCC6 by the proteasome. Mediates the recruitment of the TFIIH complex and other factors that are required for nucleotide excision repair to RNA polymerase II. Also required to inactivate stalled RNA polymerase II by blocking the access of TCEA1/TFIIS, thereby preventing reactivation of RNA polymerase II. Not involved in processing oxidative damage. This chain is UV-stimulated scaffold protein A, found in Homo sapiens (Human).